We begin with the raw amino-acid sequence, 257 residues long: Beta-fibrinogenase mucrofibrase-5 (257 aa).

A signal peptide spans methionine 1 to alanine 18. Residues glutamine 19–leucine 24 constitute a propeptide that is removed on maturation. Residues isoleucine 25–alanine 248 enclose the Peptidase S1 domain. Intrachain disulfides connect cysteine 31–cysteine 162, cysteine 49–cysteine 65, cysteine 97–cysteine 255, cysteine 141–cysteine 209, cysteine 173–cysteine 188, and cysteine 199–cysteine 224. Histidine 64 (charge relay system) is an active-site residue. An N-linked (GlcNAc...) asparagine glycan is attached at asparagine 102. The Charge relay system role is filled by aspartate 109. The active-site Charge relay system is serine 203.

It belongs to the peptidase S1 family. Snake venom subfamily. Monomer. As to expression, expressed by the venom gland.

It localises to the secreted. Its function is as follows. Snake venom serine protease with strong beta-fibrinogenolytic activities, angiotensin I (AGT)-degrading activities and strong kallikrein-like activities in vitro, releasing bradykinin from kininogen (KNG1). Intravenous injection mildly lowers blood pressure in experimental rats, which may be explained by the action on angiotensin I and kininogen. Exhibits amidase activity against N-benzoyl-Pro-Phe-Arg-p-nitroanilide in vitro. The sequence is that of Beta-fibrinogenase mucrofibrase-5 from Protobothrops mucrosquamatus (Taiwan habu).